The following is a 1161-amino-acid chain: ATP-dependent helicase/deoxyribonuclease subunit B (1161 aa).

It belongs to the helicase family. AddB/RexB type 2 subfamily. As to quaternary structure, heterodimer of AddA and RexB. Mg(2+) is required as a cofactor.

In terms of biological role, the heterodimer acts as both an ATP-dependent DNA helicase and an ATP-dependent, dual-direction single-stranded exonuclease. Recognizes the chi site generating a DNA molecule suitable for the initiation of homologous recombination. This subunit has 5' -&gt; 3' nuclease activity but not helicase activity. This chain is ATP-dependent helicase/deoxyribonuclease subunit B, found in Oenococcus oeni (strain ATCC BAA-331 / PSU-1).